A 117-amino-acid polypeptide reads, in one-letter code: MKKLLAIALTVLATVFAFGTPAFAADAAAGAQVFAANCAACHAGGNNAVMPTKTLKADALKTYLAGYKDGSKSLEEAVAYQVTNGQGAMPAFGGRLSDADIANVAAYIADQAENNKW.

The N-terminal stretch at 1-24 (MKKLLAIALTVLATVFAFGTPAFA) is a signal peptide. Cys-38, Cys-41, His-42, and Met-89 together coordinate heme c.

This sequence belongs to the cytochrome c family. PetJ subfamily. As to quaternary structure, monomer. Binds 1 heme c group covalently per subunit.

It is found in the cellular thylakoid lumen. In terms of biological role, functions as an electron carrier between membrane-bound cytochrome b6-f and photosystem I in oxygenic photosynthesis. The sequence is that of Cytochrome c6 (petJ) from Picosynechococcus sp. (strain ATCC 27264 / PCC 7002 / PR-6) (Agmenellum quadruplicatum).